The following is a 459-amino-acid chain: Cysteine--tRNA ligase (459 aa).

C28 contacts Zn(2+). A 'HIGH' region motif is present at residues 30 to 40 (VTIYDLCHIGH). Zn(2+) contacts are provided by C209, H234, and E238. The 'KMSKS' region signature appears at 266 to 270 (KMSKS). ATP is bound at residue K269.

Belongs to the class-I aminoacyl-tRNA synthetase family. In terms of assembly, monomer. Requires Zn(2+) as cofactor.

It localises to the cytoplasm. It carries out the reaction tRNA(Cys) + L-cysteine + ATP = L-cysteinyl-tRNA(Cys) + AMP + diphosphate. This is Cysteine--tRNA ligase from Shewanella piezotolerans (strain WP3 / JCM 13877).